The following is a 529-amino-acid chain: Glutamyl-tRNA(Gln) amidotransferase subunit B-2, chloroplastic/mitochondrial (529 aa).

A disordered region spans residues serine 17–valine 61.

It belongs to the GatB/GatE family. GatB subfamily. In terms of assembly, subunit of the heterotrimeric GatCAB amidotransferase (AdT) complex, composed of A, B and C subunits.

It localises to the mitochondrion. Its subcellular location is the plastid. It is found in the chloroplast. The catalysed reaction is L-glutamyl-tRNA(Gln) + L-glutamine + ATP + H2O = L-glutaminyl-tRNA(Gln) + L-glutamate + ADP + phosphate + H(+). Its function is as follows. Allows the formation of correctly charged Gln-tRNA(Gln) through the transamidation of misacylated Glu-tRNA(Gln) in chloroplasts and mitochondria. The reaction takes place in the presence of glutamine and ATP through an activated gamma-phospho-Glu-tRNA(Gln). The sequence is that of Glutamyl-tRNA(Gln) amidotransferase subunit B-2, chloroplastic/mitochondrial from Micromonas commoda (strain RCC299 / NOUM17 / CCMP2709) (Picoplanktonic green alga).